The following is a 390-amino-acid chain: Chorismate synthase (390 aa).

R39 and R45 together coordinate NADP(+). FMN contacts are provided by residues 132-134 (RSS), 253-254 (NA), G298, 313-317 (KPIPT), and R339.

This sequence belongs to the chorismate synthase family. As to quaternary structure, homotetramer. The cofactor is FMNH2.

The catalysed reaction is 5-O-(1-carboxyvinyl)-3-phosphoshikimate = chorismate + phosphate. The protein operates within metabolic intermediate biosynthesis; chorismate biosynthesis; chorismate from D-erythrose 4-phosphate and phosphoenolpyruvate: step 7/7. Its function is as follows. Catalyzes the anti-1,4-elimination of the C-3 phosphate and the C-6 proR hydrogen from 5-enolpyruvylshikimate-3-phosphate (EPSP) to yield chorismate, which is the branch point compound that serves as the starting substrate for the three terminal pathways of aromatic amino acid biosynthesis. This reaction introduces a second double bond into the aromatic ring system. The protein is Chorismate synthase of Shouchella clausii (strain KSM-K16) (Alkalihalobacillus clausii).